Reading from the N-terminus, the 173-residue chain is Ribosome maturation factor RimM (173 aa).

One can recognise a PRC barrel domain in the interval 92–165; sequence EDEYYHTDLI…RVVVALPQEI (74 aa).

The protein belongs to the RimM family. Binds ribosomal protein uS19.

It is found in the cytoplasm. Its function is as follows. An accessory protein needed during the final step in the assembly of 30S ribosomal subunit, possibly for assembly of the head region. Essential for efficient processing of 16S rRNA. May be needed both before and after RbfA during the maturation of 16S rRNA. It has affinity for free ribosomal 30S subunits but not for 70S ribosomes. In Bradyrhizobium diazoefficiens (strain JCM 10833 / BCRC 13528 / IAM 13628 / NBRC 14792 / USDA 110), this protein is Ribosome maturation factor RimM.